Here is a 381-residue protein sequence, read N- to C-terminus: Queuine tRNA-ribosyltransferase (381 aa).

Aspartate 89 functions as the Proton acceptor in the catalytic mechanism. Substrate-binding positions include 89 to 93 (DSGGF), aspartate 143, glutamine 187, and glycine 214. Positions 245 to 251 (GVGKPED) are RNA binding. Residue aspartate 264 is the Nucleophile of the active site. The interval 269 to 273 (TRNAR) is RNA binding; important for wobble base 34 recognition. The Zn(2+) site is built by cysteine 302, cysteine 304, cysteine 307, and histidine 333.

It belongs to the queuine tRNA-ribosyltransferase family. In terms of assembly, homodimer. Within each dimer, one monomer is responsible for RNA recognition and catalysis, while the other monomer binds to the replacement base PreQ1. The cofactor is Zn(2+).

It carries out the reaction 7-aminomethyl-7-carbaguanine + guanosine(34) in tRNA = 7-aminomethyl-7-carbaguanosine(34) in tRNA + guanine. It functions in the pathway tRNA modification; tRNA-queuosine biosynthesis. Its function is as follows. Catalyzes the base-exchange of a guanine (G) residue with the queuine precursor 7-aminomethyl-7-deazaguanine (PreQ1) at position 34 (anticodon wobble position) in tRNAs with GU(N) anticodons (tRNA-Asp, -Asn, -His and -Tyr). Catalysis occurs through a double-displacement mechanism. The nucleophile active site attacks the C1' of nucleotide 34 to detach the guanine base from the RNA, forming a covalent enzyme-RNA intermediate. The proton acceptor active site deprotonates the incoming PreQ1, allowing a nucleophilic attack on the C1' of the ribose to form the product. After dissociation, two additional enzymatic reactions on the tRNA convert PreQ1 to queuine (Q), resulting in the hypermodified nucleoside queuosine (7-(((4,5-cis-dihydroxy-2-cyclopenten-1-yl)amino)methyl)-7-deazaguanosine). The sequence is that of Queuine tRNA-ribosyltransferase from Pectobacterium carotovorum subsp. carotovorum (strain PC1).